Reading from the N-terminus, the 113-residue chain is Holo-[acyl-carrier-protein] synthase (113 aa).

Residues Asp-5 and Glu-50 each contribute to the Mg(2+) site.

Belongs to the P-Pant transferase superfamily. AcpS family. Mg(2+) is required as a cofactor.

Its subcellular location is the cytoplasm. The catalysed reaction is apo-[ACP] + CoA = holo-[ACP] + adenosine 3',5'-bisphosphate + H(+). Its function is as follows. Transfers the 4'-phosphopantetheine moiety from coenzyme A to a Ser of acyl-carrier-protein. In Nautilia profundicola (strain ATCC BAA-1463 / DSM 18972 / AmH), this protein is Holo-[acyl-carrier-protein] synthase.